The chain runs to 725 residues: Methionine--tRNA ligase (725 aa).

A 'HIGH' region motif is present at residues 27–37 (PYANGQIHIGH). Zn(2+) contacts are provided by Cys158, Cys161, Cys171, and Cys174. The 'KMSKS' region motif lies at 348-352 (KMSKS). Lys351 lines the ATP pocket. A tRNA-binding domain is found at 619 to 725 (DFAKIDLRIA…SGAKPGMRVK (107 aa)).

This sequence belongs to the class-I aminoacyl-tRNA synthetase family. MetG type 1 subfamily. In terms of assembly, homodimer. The cofactor is Zn(2+).

It localises to the cytoplasm. It carries out the reaction tRNA(Met) + L-methionine + ATP = L-methionyl-tRNA(Met) + AMP + diphosphate. In terms of biological role, is required not only for elongation of protein synthesis but also for the initiation of all mRNA translation through initiator tRNA(fMet) aminoacylation. The protein is Methionine--tRNA ligase of Burkholderia pseudomallei (strain 1710b).